The sequence spans 227 residues: MAKQKQQYVTIKGTKDGLTLHLDDRCSYDDLLKEIEERLVKQAGVAPDSPLVSVHLKIGNRYLTPAQEEEVRALIRRSKNLVVDSIESNVMSKAEAIEWMRKTEIVPVSRIVRSGQVLHVEGDLLLIGDVNPGGTVIAGGNIFILGALRGIAHAGYAGNKQAIIVASVMKPMQLRIGDIMSRAPDSKTDEGNEMECAYIDEHNQIVVDRLQLLMHLRPNLTRLERRM.

Belongs to the MinC family. As to quaternary structure, interacts with MinD and FtsZ.

Functionally, cell division inhibitor that blocks the formation of polar Z ring septums. Rapidly oscillates between the poles of the cell to destabilize FtsZ filaments that have formed before they mature into polar Z rings. Prevents FtsZ polymerization. In Geobacillus kaustophilus (strain HTA426), this protein is Probable septum site-determining protein MinC.